The chain runs to 777 residues: Semaphorin-3D (777 aa).

The signal sequence occupies residues 1–37 (MNVTKDENPRSRSQDLHLFHAWMMLIMTVLFLPVTET). The Sema domain maps to 44–531 (RLKLTYKDLL…SWDGLVQLSL (488 aa)). An intrachain disulfide couples Cys-117 to Cys-128. An N-linked (GlcNAc...) asparagine glycan is attached at Asn-139. Cystine bridges form between Cys-146–Cys-155, Cys-286–Cys-398, Cys-310–Cys-358, and Cys-534–Cys-552. The region spanning 533–585 (RCDTYGKACADCCLARDPYCAWDGNACSRYAPTSKRRARRQDVKYGDPITQCW) is the PSI domain. Residues 592–680 (SHETADEKVI…TFIHTIVKLT (89 aa)) enclose the Ig-like C2-type domain. Asn-607 and Asn-724 each carry an N-linked (GlcNAc...) asparagine glycan. Cys-665 and Cys-731 are joined by a disulfide. Over residues 740–765 (RRQRNKGSPKWKHMQEMKKKRNRRHH) the composition is skewed to basic residues. The segment at 740 to 777 (RRQRNKGSPKWKHMQEMKKKRNRRHHRDLDELQRSVAT) is disordered. Positions 766 to 777 (RDLDELQRSVAT) are enriched in basic and acidic residues.

The protein belongs to the semaphorin family.

The protein resides in the secreted. Functionally, induces the collapse and paralysis of neuronal growth cones. Could potentially act as repulsive cues toward specific neuronal populations. Binds to neuropilin. This is Semaphorin-3D (Sema3d) from Mus musculus (Mouse).